The following is a 533-amino-acid chain: MRKILPLRAWLAAGLILGSPFSHAASNLVFCSEGSPAGFDPAQYTTGTDYDATSVTLFNRLVQFERGGTRAIPALAESWDIGDDGKTYTFHLRKGVKFHSTDYFKPTREFNADDVLFTFQRMLDKNHPFRKAYPTEFPYFTDMGLDKNIARVEKLDEHRVKFTLNEVDAAFIQNLAMDVASIQSAEYAGQLLEAGKPQQINQKPIGTGPFILSRYQKDAQIRFKGNKDYWKPEDVKIDNLIFSINTDAAVRAQKLKAGECQITLNPRPADLKALQEAANLKVPSQPGFNLGYIAYNVTHKPFDQLEVRQALDMAVNKQAIIDAVYQGAGQLAVNGMPPTQWSYDETIKDAPFDPAKARELLKKAGVAEGTEITLWAMPVQRPYNPNAKLMAEMIQADWAKIGIKARIVSYEWGEYIKRAHAGEHDAMLFGWTGDNGDPDNWLATLYGCDSINGNNVSKWCDAAYDKLVKAAKRVSDQDKRSELYKQAQHILKEQVPITPIAHSTVYQPMSKSVHGFKISPFSRNAFYGVANQP.

Residues 1 to 24 form the signal peptide; sequence MRKILPLRAWLAAGLILGSPFSHA.

This sequence belongs to the bacterial solute-binding protein 5 family.

The protein resides in the periplasm. Binds different dipeptides. Probably bind only L-amino acid containing dipeptides. The protein is Dipeptide-binding protein of Pseudomonas aeruginosa (strain ATCC 15692 / DSM 22644 / CIP 104116 / JCM 14847 / LMG 12228 / 1C / PRS 101 / PAO1).